A 509-amino-acid polypeptide reads, in one-letter code: Maturase K (509 aa).

The protein belongs to the intron maturase 2 family. MatK subfamily.

It is found in the plastid. The protein resides in the chloroplast. Functionally, usually encoded in the trnK tRNA gene intron. Probably assists in splicing its own and other chloroplast group II introns. This is Maturase K from Clematis ligusticifolia (Western white clematis).